The sequence spans 257 residues: 3-methyl-2-oxobutanoate hydroxymethyltransferase (257 aa).

Mg(2+) is bound by residues Asp42 and Asp86. 3-methyl-2-oxobutanoate is bound by residues Asp42–Ser43, Asp86, and Lys116. Mg(2+) is bound at residue Glu118. The active-site Proton acceptor is the Glu185.

Belongs to the PanB family. In terms of assembly, homodecamer; pentamer of dimers. Mg(2+) is required as a cofactor.

Its subcellular location is the cytoplasm. It catalyses the reaction 3-methyl-2-oxobutanoate + (6R)-5,10-methylene-5,6,7,8-tetrahydrofolate + H2O = 2-dehydropantoate + (6S)-5,6,7,8-tetrahydrofolate. Its pathway is cofactor biosynthesis; (R)-pantothenate biosynthesis; (R)-pantoate from 3-methyl-2-oxobutanoate: step 1/2. Functionally, catalyzes the reversible reaction in which hydroxymethyl group from 5,10-methylenetetrahydrofolate is transferred onto alpha-ketoisovalerate to form ketopantoate. The protein is 3-methyl-2-oxobutanoate hydroxymethyltransferase of Prochlorococcus marinus (strain AS9601).